We begin with the raw amino-acid sequence, 248 residues long: Caffeoyl-CoA O-methyltransferase 3 (248 aa).

Residue Lys22 coordinates substrate. S-adenosyl-L-methionine-binding positions include Thr64, Glu86, 88–89 (GV), Ser94, Asp112, and Ala141. Asp164 lines the substrate pocket. Position 164 (Asp164) interacts with a divalent metal cation. Residue Asp166 coordinates S-adenosyl-L-methionine. A divalent metal cation-binding residues include Asp190 and Asn191. Asn195 provides a ligand contact to substrate.

It belongs to the class I-like SAM-binding methyltransferase superfamily. Cation-dependent O-methyltransferase family. CCoAMT subfamily. It depends on a divalent metal cation as a cofactor. As to expression, mostly expressed in petal limbs and tubes, and, at low levels, in stems, roots and leaves.

The protein resides in the cytoplasm. The protein localises to the cytosol. It carries out the reaction (E)-caffeoyl-CoA + S-adenosyl-L-methionine = (E)-feruloyl-CoA + S-adenosyl-L-homocysteine + H(+). The enzyme catalyses (E)-5-hydroxyferuloyl-CoA + S-adenosyl-L-methionine = (E)-sinapoyl-CoA + S-adenosyl-L-homocysteine + H(+). It participates in aromatic compound metabolism; phenylpropanoid biosynthesis. Its function is as follows. Involved in the production of floral volatile phenylpropanoids in flowers of fragrant cultivars (e.g. cv. Mitchell and cv. V26) from cinnamic acid, a common precursor with the anthocyanin biosynthesis pathway involved in flower pigmentation. Methylates caffeoyl-CoA to feruloyl-CoA, also able to methylate 5-hydroxyferuloyl-CoA. This Petunia hybrida (Petunia) protein is Caffeoyl-CoA O-methyltransferase 3.